Reading from the N-terminus, the 316-residue chain is MENVTTMNEFLLLGLTGVQELQPFFFGIFLIIYLINLIGNGSILVMVVLEPQLHSPMYFFLGNLSCLDISYSSVTLPKLLVNLVCSRRAISFLGCITQLHFFHFLGSTEAILLAIMAFDRFVAICNPLRYTVIMNPQVCILLAAAAWLISFFYALMHSVMTAHLSFCGSQKLNHFFYDVKPLLELACSDTLLNQWLLSIVTGSISMGAFFLTLLSCFYVIGFLLFKNRSCRILHKALSTCASHFMVVCLFYGPVGFTYIRPASATSMIQDRIMAIMYSAVTPVLNPLIYTLRNKEVMMALKKIFGRKLFKDWQQHH.

Residues methionine 1–proline 23 lie on the Extracellular side of the membrane. Residue asparagine 3 is glycosylated (N-linked (GlcNAc...) asparagine). A helical transmembrane segment spans residues phenylalanine 24 to leucine 44. The Cytoplasmic segment spans residues valine 45–glutamine 52. A helical transmembrane segment spans residues leucine 53–serine 73. The Extracellular segment spans residues valine 74–threonine 97. Cysteine 95 and cysteine 187 are joined by a disulfide. Residues glutamine 98–phenylalanine 118 traverse the membrane as a helical segment. Residues aspartate 119–glutamine 137 are Cytoplasmic-facing. The chain crosses the membrane as a helical span at residues valine 138–serine 158. Over valine 159–tryptophan 195 the chain is Extracellular. Residues leucine 196–serine 215 form a helical membrane-spanning segment. Residues cysteine 216 to alanine 236 lie on the Cytoplasmic side of the membrane. A helical membrane pass occupies residues leucine 237 to threonine 257. Over tyrosine 258–aspartate 270 the chain is Extracellular. A helical membrane pass occupies residues arginine 271–leucine 291. Residues arginine 292–histidine 316 are Cytoplasmic-facing.

Belongs to the G-protein coupled receptor 1 family.

Its subcellular location is the cell membrane. Its function is as follows. Odorant receptor. The sequence is that of Olfactory receptor 12D3 (OR12D3) from Homo sapiens (Human).